Here is a 348-residue protein sequence, read N- to C-terminus: Lipopolysaccharide heptosyltransferase 2 (348 aa).

It belongs to the glycosyltransferase 9 family.

It carries out the reaction an L-alpha-D-Hep-(1-&gt;5)-[alpha-Kdo-(2-&gt;4)]-alpha-Kdo-(2-&gt;6)-lipid A + ADP-L-glycero-beta-D-manno-heptose = an L-alpha-D-Hep-(1-&gt;3)-L-alpha-D-Hep-(1-&gt;5)-[alpha-Kdo-(2-&gt;4)]-alpha-Kdo-(2-&gt;6)-lipid A + ADP + H(+). Its pathway is bacterial outer membrane biogenesis; LPS core biosynthesis. Its function is as follows. Glycosyltransferase involved in the biosynthesis of the core oligosaccharide region of lipopolysaccharide (LPS). Catalyzes the addition of the second heptose unit to the heptosyl-Kdo2-lipid A module. In Salmonella typhimurium (strain LT2 / SGSC1412 / ATCC 700720), this protein is Lipopolysaccharide heptosyltransferase 2.